The sequence spans 169 residues: NADH-quinone oxidoreductase subunit I (169 aa).

4Fe-4S ferredoxin-type domains lie at 61–90 and 100–129; these read RRYD…IESE and TRYD…ETHI. 8 residues coordinate [4Fe-4S] cluster: C70, C73, C76, C80, C109, C112, C115, and C119.

This sequence belongs to the complex I 23 kDa subunit family. In terms of assembly, NDH-1 is composed of 14 different subunits. Subunits NuoA, H, J, K, L, M, N constitute the membrane sector of the complex. [4Fe-4S] cluster is required as a cofactor.

It is found in the cell inner membrane. The catalysed reaction is a quinone + NADH + 5 H(+)(in) = a quinol + NAD(+) + 4 H(+)(out). Functionally, NDH-1 shuttles electrons from NADH, via FMN and iron-sulfur (Fe-S) centers, to quinones in the respiratory chain. The immediate electron acceptor for the enzyme in this species is believed to be ubiquinone. Couples the redox reaction to proton translocation (for every two electrons transferred, four hydrogen ions are translocated across the cytoplasmic membrane), and thus conserves the redox energy in a proton gradient. This chain is NADH-quinone oxidoreductase subunit I, found in Verminephrobacter eiseniae (strain EF01-2).